Consider the following 141-residue polypeptide: Hemoglobin subunit alpha (141 aa).

In terms of domain architecture, Globin spans 1-141 (VLSANDKTNV…VSTVLTSKYR (141 aa)). At Ser-3 the chain carries Phosphoserine. Lys-7 bears the N6-succinyllysine mark. Position 8 is a phosphothreonine (Thr-8). An N6-succinyllysine modification is found at Lys-11. Residue Lys-16 is modified to N6-acetyllysine; alternate. Lys-16 is modified (N6-succinyllysine; alternate). The residue at position 24 (Tyr-24) is a Phosphotyrosine. Ser-35 carries the phosphoserine modification. Residue Lys-40 is modified to N6-succinyllysine. Phosphoserine is present on Ser-49. Gln-58 lines the O2 pocket. Position 87 (His-87) interacts with heme b. Thr-108 is subject to Phosphothreonine. Phosphoserine occurs at positions 124 and 131. A phosphothreonine mark is found at Thr-134 and Thr-137. Ser-138 bears the Phosphoserine mark.

This sequence belongs to the globin family. As to quaternary structure, heterotetramer of two alpha chains and two beta chains. As to expression, red blood cells.

In terms of biological role, involved in oxygen transport from the lung to the various peripheral tissues. Functionally, hemopressin acts as an antagonist peptide of the cannabinoid receptor CNR1. Hemopressin-binding efficiently blocks cannabinoid receptor CNR1 and subsequent signaling. In Didelphis virginiana (North American opossum), this protein is Hemoglobin subunit alpha (HBA).